The chain runs to 34 residues: Kappa-theraphotoxin-Sc1a (34 aa).

Disulfide bonds link C2/C16, C9/C21, and C15/C28. Isoleucine amide is present on I34.

The protein belongs to the neurotoxin 10 (Hwtx-1) family. 57 (ScTx1) subfamily. As to expression, expressed by the venom gland.

It localises to the secreted. Acts as a gating-modifier to inhibit voltage-gated potassium channels. It inhibits delayed Kv2.1/KCNB1 (IC(50) is 12.7 nM), Kv2.1/Kv9.3 (IC(50) is 7.2 nM) (KCNB1/KCNS3), Kv2.2/KCNB2 (IC(50) is 21.4 nM), and transient Kv4.2/KCND2 (IC(50) is 1.2 nM) channels. The chain is Kappa-theraphotoxin-Sc1a from Stromatopelma calceatum (Featherleg baboon tarantula).